Reading from the N-terminus, the 297-residue chain is Ectoine dioxygenase (297 aa).

Residue Gln-131 participates in L-ectoine binding. Lys-137 is a binding site for 2-oxoglutarate. Fe cation-binding residues include His-148, Asp-150, and His-249.

It belongs to the PhyH family. EctD subfamily. In terms of assembly, homodimer. Requires Fe(2+) as cofactor.

The catalysed reaction is L-ectoine + 2-oxoglutarate + O2 = 5-hydroxyectoine + succinate + CO2. In terms of biological role, involved in the biosynthesis of 5-hydroxyectoine, called compatible solute, which helps organisms to survive extreme osmotic stress by acting as a highly soluble organic osmolyte. Catalyzes the 2-oxoglutarate-dependent selective hydroxylation of L-ectoine to yield (4S,5S)-5-hydroxyectoine. This Streptomyces anulatus (Streptomyces chrysomallus) protein is Ectoine dioxygenase.